The sequence spans 151 residues: Probable cGMP 3',5'-cyclic phosphodiesterase subunit delta (151 aa).

Belongs to the PDE6D/unc-119 family. In terms of assembly, interacts with Pde6.

It is found in the nucleus. The protein localises to the cytoplasm. The sequence is that of Probable cGMP 3',5'-cyclic phosphodiesterase subunit delta from Drosophila persimilis (Fruit fly).